A 327-amino-acid chain; its full sequence is L-serine dehydratase/L-threonine deaminase (327 aa).

Ala-2 carries the N-acetylalanine modification. Lys-41 is subject to N6-(pyridoxal phosphate)lysine. Pro-128 contributes to the pyridoxal 5'-phosphate binding site.

Belongs to the serine/threonine dehydratase family. Homodimer. Requires pyridoxal 5'-phosphate as cofactor.

It is found in the cytoplasm. It catalyses the reaction L-serine = pyruvate + NH4(+). The enzyme catalyses L-threonine = 2-oxobutanoate + NH4(+). The protein operates within carbohydrate biosynthesis; gluconeogenesis. In terms of biological role, catalyzes the pyridoxal-phosphate-dependent dehydrative deamination of L-threonine and L-serine to ammonia and alpha-ketobutyrate and pyruvate, respectively. This chain is L-serine dehydratase/L-threonine deaminase (Sds), found in Mus musculus (Mouse).